A 180-amino-acid chain; its full sequence is MQNPQNLIWIDLEMTGLDPDRDVIIEMATIVTDSDLNTLAEGPVIAIHQPEEILAGMDEWNTRQHGQSGLTQRVRESTVSMAEAEAQTLAFLEQWVPKRSSPICGNSICQDRRFLYRHMPRLEGYFHYRNLDVSTLKELAARWAPQVRESFKKGNTHLALDDIRESIAELRHYRDHFIKL.

The Exonuclease domain maps to 7 to 170 (LIWIDLEMTG…DDIRESIAEL (164 aa)). Tyr-128 is a catalytic residue.

Belongs to the oligoribonuclease family.

It localises to the cytoplasm. Its function is as follows. 3'-to-5' exoribonuclease specific for small oligoribonucleotides. This chain is Oligoribonuclease, found in Pseudomonas aeruginosa (strain UCBPP-PA14).